We begin with the raw amino-acid sequence, 1007 residues long: Aldehyde reductase lnbA (1007 aa).

The segment at 35–428 is adenylation (A) domain; the sequence is QVRQSPSSIA…GRVDHQIKVR (394 aa). The 78-residue stretch at 540 to 617 folds into the Carrier domain; the sequence is TLCQDTQTVL…ALASIIDHAK (78 aa). Serine 577 carries the post-translational modification O-(pantetheine 4'-phosphoryl)serine. Residues 659–998 are short-chain dehydrogenase/reductase (R) domain; it reads IFITGATGFV…PTLDCSLLKK (340 aa).

The protein belongs to the NRP synthetase family.

The enzyme catalyses L-tyrosinal + AMP + diphosphate + NADP(+) = L-tyrosine + ATP + NADPH + H(+). It functions in the pathway secondary metabolite biosynthesis. Its function is as follows. Non-canonical nonribosomal peptide synthetase; part of the lnb gene cluster that mediates the biosynthesis of diastereomeric piperazines. Lna and lnb clusters encode sets of enzymes that produce overlapping sets of previously undescribed metabolites such as piperazinomycin-like metabolites or morpholine. The lna and lnb biosynthetic pathways appear to be part of a signaling network that controls the formation of sclerotia, a resilient overwintering structure. One primary function of the non-canonical nonribosomal peptide synthetases lnaA and lnbA consists in the reduction of L-tyrosine. The presence in the clusters of tailoring enzymes such as the oxidoreductases lnaB, lnbB, lnaE or lnbE, as well as of the cytochrome P450 monooxygenases lnaC, lnaD, or lnbC, might explain formation of various diastereomeric piperazines. The chain is Aldehyde reductase lnbA from Aspergillus flavus (strain ATCC 200026 / FGSC A1120 / IAM 13836 / NRRL 3357 / JCM 12722 / SRRC 167).